Reading from the N-terminus, the 330-residue chain is DNA-directed RNA polymerase subunit alpha (330 aa).

Positions 1-236 are alpha N-terminal domain (alpha-NTD); it reads MQGSVTEFLK…EQLDAFVDLR (236 aa). The segment at 250–330 is alpha C-terminal domain (alpha-CTD); the sequence is FDPILLRPVD…NWPPASIAED (81 aa).

This sequence belongs to the RNA polymerase alpha chain family. Homodimer. The RNAP catalytic core consists of 2 alpha, 1 beta, 1 beta' and 1 omega subunit. When a sigma factor is associated with the core the holoenzyme is formed, which can initiate transcription.

The enzyme catalyses RNA(n) + a ribonucleoside 5'-triphosphate = RNA(n+1) + diphosphate. In terms of biological role, DNA-dependent RNA polymerase catalyzes the transcription of DNA into RNA using the four ribonucleoside triphosphates as substrates. The polypeptide is DNA-directed RNA polymerase subunit alpha (Vibrio campbellii (strain ATCC BAA-1116)).